The sequence spans 144 residues: Dynein light chain Tctex-type protein 2B (144 aa).

This sequence belongs to the dynein light chain Tctex-type family. In terms of assembly, light chain of the cytoplasmic dynein complex 2, a multisubunit complex composed at least of eleven different proteins. The cytoplasmic dynein 2 complex consists of two catalytic heavy chains (HCs) and a number of non-catalytic subunits presented by intermediate chains (ICs), light intermediate chains (LICs) and light chains (LCs). Among them, a heavy chain (DYNC2H1), two intermediate chains (DYNC2I2 and DYNC2I1), a light intermediate chain (DYNC2LI1), and a light chain (DYNLT2B) are unique to the dynein-2 complex, but a subset of the light chains are also shared by dynein-1 and dynein-2 complexes. The dimer DYNLT2B-DYNLT1/DYNLT3 interacts with DYNC2I1; this interaction is crucial for retrograde trafficking of ciliary proteins.

Its subcellular location is the dynein axonemal particle. Its function is as follows. Acts as one of several non-catalytic accessory components of the cytoplasmic dynein 2 complex (dynein-2 complex), a motor protein complex that drives the movement of cargos along microtubules within cilia and flagella in concert with the intraflagellar transport (IFT) system. Required for proper retrograde ciliary transport. The sequence is that of Dynein light chain Tctex-type protein 2B (Dynlt2b) from Mus musculus (Mouse).